The chain runs to 283 residues: Elongation factor Ts (283 aa).

Residues 79–82 (TDFV) form an involved in Mg(2+) ion dislocation from EF-Tu region.

Belongs to the EF-Ts family.

It localises to the cytoplasm. Associates with the EF-Tu.GDP complex and induces the exchange of GDP to GTP. It remains bound to the aminoacyl-tRNA.EF-Tu.GTP complex up to the GTP hydrolysis stage on the ribosome. The chain is Elongation factor Ts from Shewanella putrefaciens (strain CN-32 / ATCC BAA-453).